The chain runs to 714 residues: Fatty acid oxidation complex subunit alpha (714 aa).

The interval 1-190 (MEMTSAFTLN…KLGLVDDVVP (190 aa)) is enoyl-CoA hydratase. Residues 306 to 714 (APLNSVGILG…FWKTTATDLQ (409 aa)) form a 3-hydroxyacyl-CoA dehydrogenase region.

The protein in the N-terminal section; belongs to the enoyl-CoA hydratase/isomerase family. It in the central section; belongs to the 3-hydroxyacyl-CoA dehydrogenase family. As to quaternary structure, heterotetramer of two alpha chains (FadJ) and two beta chains (FadI).

It localises to the cytoplasm. The enzyme catalyses a (3S)-3-hydroxyacyl-CoA = a (2E)-enoyl-CoA + H2O. The catalysed reaction is a 4-saturated-(3S)-3-hydroxyacyl-CoA = a (3E)-enoyl-CoA + H2O. It carries out the reaction a (3S)-3-hydroxyacyl-CoA + NAD(+) = a 3-oxoacyl-CoA + NADH + H(+). It catalyses the reaction (3S)-3-hydroxybutanoyl-CoA = (3R)-3-hydroxybutanoyl-CoA. It participates in lipid metabolism; fatty acid beta-oxidation. Functionally, catalyzes the formation of a hydroxyacyl-CoA by addition of water on enoyl-CoA. Also exhibits 3-hydroxyacyl-CoA epimerase and 3-hydroxyacyl-CoA dehydrogenase activities. Strongly involved in the anaerobic degradation of long and medium-chain fatty acids in the presence of nitrate and weakly involved in the aerobic degradation of long-chain fatty acids. The protein is Fatty acid oxidation complex subunit alpha (fadJ) of Escherichia coli (strain K12).